Reading from the N-terminus, the 194-residue chain is Large ribosomal subunit protein eL15 (194 aa).

The interval 158 to 194 (ANRGLTSAGKKGRGLMYKGKGAEKARPGVRANGKKTK) is disordered.

The protein belongs to the eukaryotic ribosomal protein eL15 family.

The polypeptide is Large ribosomal subunit protein eL15 (Methanococcus maripaludis (strain DSM 14266 / JCM 13030 / NBRC 101832 / S2 / LL)).